Consider the following 345-residue polypeptide: Ryncolin-1 (345 aa).

Positions 1-19 (MKPWAAFHLIFLVASSLEG) are cleaved as a signal peptide. Positions 48–118 (ILQSQPGIPG…DKGDKGEDCN (71 aa)) are disordered. The 58-residue stretch at 57 to 114 (GIPGVPGTNGSEGLKGDPGPQGPPGIRGPDGIRGEAGPKGDKGDQGDKGDKGDKGDKG) folds into the Collagen-like domain. Residues 86-116 (DGIRGEAGPKGDKGDQGDKGDKGDKGDKGED) are compositionally biased toward basic and acidic residues. Positions 121–339 (GCLPTEVRNC…YADMKIRPQQ (219 aa)) constitute a Fibrinogen C-terminal domain. 2 disulfide bridges follow: C130–C158 and C282–C295.

The protein belongs to the ficolin lectin family. Veficolin subfamily. In terms of processing, hydroxylated, possibly at Pro-80. In terms of tissue distribution, expressed by the venom duct.

It is found in the secreted. Its function is as follows. Initiates complement activation and/or interferes in platelet aggregation and/or blood coagulation. The protein is Ryncolin-1 of Cerberus rynchops (Dog-faced water snake).